We begin with the raw amino-acid sequence, 375 residues long: E3 ubiquitin-protein ligase RNF34 (375 aa).

Residues 56–107 (EGPNIVCKACGLSFSVFRKKHVCCDCKKDFCSVCSVLQENLRRCSTCHLLQE) form an FYVE-type zinc finger. In terms of domain architecture, SAP 1 spans 115–134 (LMRLKVKDLRQYLILRNIPI). The residue at position 169 (serine 169) is a Phosphoserine. A disordered region spans residues 202–250 (RTLGSGALAQEPSEIASANTEDDEDDDDDDDDDDDDDEENLEDRTPGLT). Positions 221-242 (TEDDEDDDDDDDDDDDDDEENL) are enriched in acidic residues. Residues serine 257 and serine 259 each carry the phosphoserine modification. Residues 267–281 (VEGMSVRQLKEILAR) enclose the SAP 2 domain. An RING-type zinc finger spans residues 328–363 (CRICMDAVIDCVLLECGHMVTCTKCGKRMSECPICR).

Interacts with CASP8 and CASP10. Interacts with p53/TP53; involved in p53/TP53 ubiquitination. Interacts (via RING-type zinc finger) with MDM2; the interaction stabilizes MDM2. Interacts (via RING-type zinc finger) with PPARGC1A. Interacts with NOD1. Post-translationally, autoubiquitinated (in vitro). In terms of processing, proteolytically cleaved by caspases upon induction of apoptosis by TNF.

It localises to the cell membrane. It is found in the endomembrane system. The protein resides in the nucleus. Its subcellular location is the nucleus speckle. The protein localises to the cytoplasm. It localises to the cytosol. The catalysed reaction is S-ubiquitinyl-[E2 ubiquitin-conjugating enzyme]-L-cysteine + [acceptor protein]-L-lysine = [E2 ubiquitin-conjugating enzyme]-L-cysteine + N(6)-ubiquitinyl-[acceptor protein]-L-lysine.. The protein operates within protein modification; protein ubiquitination. Its function is as follows. E3 ubiquitin-protein ligase that regulates several biological processes through the ubiquitin-mediated proteasomal degradation of various target proteins. Ubiquitinates the caspases CASP8 and CASP10, promoting their proteasomal degradation, to negatively regulate cell death downstream of death domain receptors in the extrinsic pathway of apoptosis. May mediate 'Lys-48'-linked polyubiquitination of RIPK1 and its subsequent proteasomal degradation thereby indirectly regulating the tumor necrosis factor-mediated signaling pathway. Negatively regulates p53/TP53 through its direct ubiquitination and targeting to proteasomal degradation. Indirectly, may also negatively regulate p53/TP53 through ubiquitination and degradation of SFN. Mediates PPARGC1A proteasomal degradation probably through ubiquitination thereby indirectly regulating the metabolism of brown fat cells. Possibly involved in innate immunity, through 'Lys-48'-linked polyubiquitination of NOD1 and its subsequent proteasomal degradation. In Bos taurus (Bovine), this protein is E3 ubiquitin-protein ligase RNF34 (RNF34).